Consider the following 397-residue polypeptide: Imidazolonepropionase (397 aa).

Fe(3+) contacts are provided by histidine 66 and histidine 68. Zn(2+)-binding residues include histidine 66 and histidine 68. 4-imidazolone-5-propanoate contacts are provided by arginine 75, tyrosine 138, and histidine 171. Tyrosine 138 serves as a coordination point for N-formimidoyl-L-glutamate. Fe(3+) is bound at residue histidine 236. Histidine 236 provides a ligand contact to Zn(2+). Glutamine 239 is a 4-imidazolone-5-propanoate binding site. Fe(3+) is bound at residue aspartate 311. Aspartate 311 contributes to the Zn(2+) binding site. The N-formimidoyl-L-glutamate site is built by asparagine 313 and glycine 315. Residue serine 316 participates in 4-imidazolone-5-propanoate binding.

The protein belongs to the metallo-dependent hydrolases superfamily. HutI family. Zn(2+) is required as a cofactor. Fe(3+) serves as cofactor.

The protein resides in the cytoplasm. It carries out the reaction 4-imidazolone-5-propanoate + H2O = N-formimidoyl-L-glutamate. The protein operates within amino-acid degradation; L-histidine degradation into L-glutamate; N-formimidoyl-L-glutamate from L-histidine: step 3/3. Catalyzes the hydrolytic cleavage of the carbon-nitrogen bond in imidazolone-5-propanoate to yield N-formimidoyl-L-glutamate. It is the third step in the universal histidine degradation pathway. This is Imidazolonepropionase from Roseobacter denitrificans (strain ATCC 33942 / OCh 114) (Erythrobacter sp. (strain OCh 114)).